Reading from the N-terminus, the 56-residue chain is Serine protease inhibitor Kazal-type 1 (56 aa).

The 54-residue stretch at 3-56 (LGREAKCNNNAGGCTKIYNPVCGTDGNTYPNECMLCVENQKRQMPVLIQRSGPC) folds into the Kazal-like domain. Intrachain disulfides connect cysteine 9–cysteine 38, cysteine 16–cysteine 35, and cysteine 24–cysteine 56.

It localises to the secreted. Serine protease inhibitor which exhibits anti-trypsin activity. In the pancreas, protects against trypsin-catalyzed premature activation of zymogens. Functionally, in the male reproductive tract, binds to sperm heads where it modulates sperm capacitance by inhibiting calcium uptake and nitrogen oxide (NO) production. This chain is Serine protease inhibitor Kazal-type 1 (SPINK1), found in Equus caballus (Horse).